The sequence spans 362 residues: Cytochrome c oxidase subunit 2 (362 aa).

The first 28 residues, Met1–Gly28, serve as a signal peptide directing secretion. Cys29 is lipidated: N-palmitoyl cysteine. The S-diacylglycerol cysteine moiety is linked to residue Cys29. 2 helical membrane passes run Phe60 to Ile80 and Ile107 to Phe127. The interval Ser171 to Asp206 is disordered. Positions Thr176–Gln191 are enriched in basic and acidic residues. The span at Asn197–Asp206 shows a compositional bias: polar residues. Cu cation is bound by residues His246, Cys287, Glu289, Cys291, His295, and Met298. Residues Asn325–Ala362 are disordered.

This sequence belongs to the cytochrome c oxidase subunit 2 family. Associates with subunits I, III and IV to form cytochrome c oxidase. Requires binuclear copper center (CuA) as cofactor.

The protein localises to the cell membrane. The enzyme catalyses 4 Fe(II)-[cytochrome c] + O2 + 8 H(+)(in) = 4 Fe(III)-[cytochrome c] + 2 H2O + 4 H(+)(out). Functionally, subunits I and II form the functional core of the enzyme complex. Electrons originating in cytochrome c are transferred via heme a and Cu(A) to the binuclear center formed by heme a3 and Cu(B). The protein is Cytochrome c oxidase subunit 2 (ctaC) of Corynebacterium diphtheriae (strain ATCC 700971 / NCTC 13129 / Biotype gravis).